The chain runs to 195 residues: Myelin-associated neurite-outgrowth inhibitor (195 aa).

The residue at position 1 (methionine 1) is an N-acetylmethionine. The Cytoplasmic portion of the chain corresponds to 1 to 18; it reads MNPVYSPGSSGVPYANAK. Position 6 is a phosphoserine (serine 6). The helical transmembrane segment at 19-42 threads the bilayer; the sequence is GIGYPAGFPMGYAAAAPAYSPNMY. Residues 43-142 are Extracellular-facing; sequence PGANPTFQAG…PAPLPPPRGN (100 aa). Residue asparagine 46 is glycosylated (N-linked (GlcNAc...) asparagine). A helical membrane pass occupies residues 143–164; the sequence is GVTMGMVAGTTMAMSAGTLLTA. Over 165–195 the chain is Cytoplasmic; the sequence is HSPTPVAPHPVTVPTYRAPGTPTYSYVPPQW.

This sequence belongs to the FAM168 family. In terms of assembly, may form homodimers. May interact with DAZAP2, FAM168A, PRDX6, RBM6, TMTC1 and YPEL2. Interacts with CDC27. In terms of processing, N-glycosylated.

Its subcellular location is the cytoplasm. It localises to the perinuclear region. It is found in the cell membrane. The protein resides in the cell projection. The protein localises to the axon. Inhibitor of neuronal axonal outgrowth. Acts as a negative regulator of CDC42 and STAT3 and a positive regulator of STMN2. Positive regulator of CDC27. This is Myelin-associated neurite-outgrowth inhibitor (FAM168B) from Bos taurus (Bovine).